The sequence spans 706 residues: G2/M phase-specific E3 ubiquitin-protein ligase (706 aa).

The C2HC pre-PHD-type zinc-finger motif lies at Asn-11–Ile-51. The segment at Leu-79–Arg-128 adopts a PHD-type 1 zinc-finger fold. Residues Pro-143 to Ser-193 form a PHD-type 2; degenerate zinc finger. A PHD-type 3 zinc finger spans residues Arg-237–Arg-286. The HECT domain maps to Ile-371–Glu-698.

The protein resides in the nucleus. It is found in the nucleolus. Its subcellular location is the cytoplasm. It carries out the reaction S-ubiquitinyl-[E2 ubiquitin-conjugating enzyme]-L-cysteine + [acceptor protein]-L-lysine = [E2 ubiquitin-conjugating enzyme]-L-cysteine + N(6)-ubiquitinyl-[acceptor protein]-L-lysine.. It functions in the pathway protein modification; protein ubiquitination. In terms of biological role, E3 ubiquitin-protein ligase which accepts ubiquitin from an E2 ubiquitin-conjugating enzyme in the form of a thioester and then directly transfers the ubiquitin to targeted substrates. Essential in early embryonic development to prevent apoptotic death. The polypeptide is G2/M phase-specific E3 ubiquitin-protein ligase (G2E3) (Macaca fascicularis (Crab-eating macaque)).